The chain runs to 378 residues: 3-dehydroquinate synthase (378 aa).

Residues 115-119, 139-140, K152, and K161 contribute to the NAD(+) site; these read GVVGD and TS. Residues E194, H256, and H275 each contribute to the Zn(2+) site.

This sequence belongs to the sugar phosphate cyclases superfamily. Dehydroquinate synthase family. It depends on Co(2+) as a cofactor. The cofactor is Zn(2+). Requires NAD(+) as cofactor.

Its subcellular location is the cytoplasm. The catalysed reaction is 7-phospho-2-dehydro-3-deoxy-D-arabino-heptonate = 3-dehydroquinate + phosphate. The protein operates within metabolic intermediate biosynthesis; chorismate biosynthesis; chorismate from D-erythrose 4-phosphate and phosphoenolpyruvate: step 2/7. Catalyzes the conversion of 3-deoxy-D-arabino-heptulosonate 7-phosphate (DAHP) to dehydroquinate (DHQ). In Brucella anthropi (strain ATCC 49188 / DSM 6882 / CCUG 24695 / JCM 21032 / LMG 3331 / NBRC 15819 / NCTC 12168 / Alc 37) (Ochrobactrum anthropi), this protein is 3-dehydroquinate synthase.